The following is a 1031-amino-acid chain: MLPVILIACLAQLVLAQADLKDLDGPNICKRRELYNVDVVYTELQSFQERGSTWCVTFPPRCSTYRIKHRVVNKTKTIAKNRIVRDCCDGYIASAGECVPHCSEPCQHGRCISPEKCKCDHGYGGPACDINCPPGWYGRNCSMQCDCLNNAVCEPFSGDCECAKGYTGARCADICPEGFFGANCSEKCRCENGGKCHHVSGECQCAPGFTGPLCDMRCPDGKHGAQCQQDCPCQNDGKCQPETGACMCNPGWTGDVCANKCPVGSYGPGCQESCECYKGAPCHHITGQCECPPGYRGERCFDECQLNTYGFNCSMTCDCANDAMCDRANGTCICNPGWTGAKCAERICEANKYGLDCNRTCECDMEHTDLCHPETGNCQCSIGWSSAQCTRPCTFLRYGPNCELTCNCKNGAKCSPVNGTCLCAPGWRGPTCEESCEPGTFGQDCALRCDCQNGAKCEPETGQCLCTAGWKNIKCDRPCDLNHFGQDCAKVCDCHNNAACNPQNGSCTCAAGWTGERCERKCDTGKFGHDCAQKCQCDFNNSLACDATNGRCVCKQDWGGVHCETNCRSGYYGENCDKVCRCLNNSSCDPDSGNCICSAGWTGADCAEPCPPGFYGMECKERCPEILHGNKSCDHITGEILCRTGYIGLTCEHPCPAGLYGPGCKLKCNCEHGGECNHVTGQCQCLPGWTGSNCNESCPTDTYGQGCAQRCRCVHHKVCRKADGMCICETGWSGTRCDEVCPEGFYGEHCMNTCACPSANFQCHAAHGCVCRSGYTGDNCDELIASQRIADQSENSSRASVALTLVLMTLFACIIFAVFIYYRRRVSNLKTEIAHVHYTHDTNPPSWPPNHNFDNPVYGMQAETRLLPNNMRSKMNNFDQRSTMSTDYGDDCNASGRVGSYSINYNHDLLTKNLNADRTNPIVYNESLKEEHVYDEIKHKEGYKDPDEYDHLDYSRPSTSQKPHYHRMNDAMLNINQDEEKPSNVKNMTVLLNKPLPPTEPEPQHECFDNTNTNLDNVSTASPSSSPKFLK.

An N-terminal signal peptide occupies residues 1 to 16 (MLPVILIACLAQLVLA). At 17–800 (QADLKDLDGP…DQSENSSRAS (784 aa)) the chain is on the extracellular side. One can recognise an EMI domain in the interval 25 to 100 (GPNICKRREL…YIASAGECVP (76 aa)). Disulfide bonds link cysteine 29/cysteine 88, cysteine 55/cysteine 62, cysteine 87/cysteine 98, cysteine 102/cysteine 111, cysteine 106/cysteine 117, and cysteine 119/cysteine 128. The N-linked (GlcNAc...) asparagine glycan is linked to asparagine 73. EGF-like domains are found at residues 99–129 (VPHC…PACD), 137–172 (YGRN…ARCA), 180–215 (FGAN…PLCD), 223–258 (HGAQ…DVCA), 266–301 (YGPG…ERCF), and 309–344 (YGFN…AKCA). The N-linked (GlcNAc...) asparagine glycan is linked to asparagine 140. 3 cysteine pairs are disulfide-bonded: cysteine 141–cysteine 153, cysteine 147–cysteine 160, and cysteine 162–cysteine 171. N-linked (GlcNAc...) asparagine glycosylation is present at asparagine 183. 9 cysteine pairs are disulfide-bonded: cysteine 184/cysteine 196, cysteine 190/cysteine 203, cysteine 205/cysteine 214, cysteine 227/cysteine 239, cysteine 233/cysteine 246, cysteine 248/cysteine 257, cysteine 270/cysteine 282, cysteine 276/cysteine 289, and cysteine 291/cysteine 300. Residue asparagine 312 is glycosylated (N-linked (GlcNAc...) asparagine). Cystine bridges form between cysteine 313/cysteine 325, cysteine 319/cysteine 332, and cysteine 334/cysteine 343. Asparagine 329 carries N-linked (GlcNAc...) asparagine glycosylation. N-linked (GlcNAc...) asparagine glycosylation occurs at asparagine 358. EGF-like domains lie at 398 to 433 (YGPN…PTCE) and 484 to 519 (FGQD…ERCE). Intrachain disulfides connect cysteine 402–cysteine 414, cysteine 408–cysteine 421, cysteine 423–cysteine 432, cysteine 488–cysteine 500, cysteine 494–cysteine 507, and cysteine 509–cysteine 518. A glycan (N-linked (GlcNAc...) asparagine) is linked at asparagine 418. An N-linked (GlcNAc...) asparagine glycan is attached at asparagine 504. 3 N-linked (GlcNAc...) asparagine glycosylation sites follow: asparagine 540, asparagine 584, and asparagine 585. An EGF-like 9 domain is found at 572–607 (YGENCDKVCRCLNNSSCDPDSGNCICSAGWTGADCA). 3 cysteine pairs are disulfide-bonded: cysteine 576-cysteine 588, cysteine 582-cysteine 595, and cysteine 597-cysteine 606. An N-linked (GlcNAc...) asparagine glycan is attached at asparagine 630. One can recognise an EGF-like 10 domain in the interval 660-695 (YGPGCKLKCNCEHGGECNHVTGQCQCLPGWTGSNCN). Cystine bridges form between cysteine 664–cysteine 676, cysteine 670–cysteine 683, and cysteine 685–cysteine 694. N-linked (GlcNAc...) asparagine glycosylation is found at asparagine 695 and asparagine 795. Residues 801–821 (VALTLVLMTLFACIIFAVFIY) traverse the membrane as a helical segment. Residues 822 to 1031 (YRRRVSNLKT…SPSSSPKFLK (210 aa)) are Cytoplasmic-facing. A compositionally biased stretch (basic and acidic residues) spans 940 to 954 (KEGYKDPDEYDHLDY). Disordered stretches follow at residues 940–964 (KEGY…QKPH) and 989–1031 (TVLL…KFLK). Positions 1009 to 1031 (DNTNTNLDNVSTASPSSSPKFLK) are enriched in polar residues.

It belongs to the MEGF family. In terms of assembly, interacts (via the cytoplasmic domain) with shark; this is required for the recruitment of drpr and glial cells to severed axons and for the phagocytosis of axonal debris by glial cells following axon injury. Interacts with ced-6. Interacts with csw; this results in dephosphorylation of drpr isoform A which is required for the inhibition of glial cell engulfment of axonal debris produced following axonal injury. Post-translationally, phosphorylated on tyrosine residues. Phosphorylation is induced by binding to prtp. It is also induced by binding to the membrane phospholipid phosphatidylserine. Phosphorylation may be mediated directly or indirectly by Src42a and is required for interaction with shark. In terms of processing, dephosphorylated by csw which is required for the inhibition of glial cell engulfment of axonal debris produced following axonal injury. As to expression, expressed in adult head (at protein level). Expressed in glia, macrophages and ectoderm (at protein level). Detected in glia around the mushroom body dorsal lobe and in glial processes infiltrating the medial lobe (at protein level). Expressed in adult brain glia including antennal lobe glia (at protein level). Expressed in the larval fat body (at protein level). Expressed in the ovary (at protein level). Isoform B: Predominant isoform in adult glia.

It localises to the cell membrane. The protein resides in the cell projection. Its subcellular location is the axon. The protein localises to the cytoplasm. It is found in the postsynaptic cell membrane. It localises to the cell cortex. The protein resides in the phagocytic cup. Its subcellular location is the cytoplasmic vesicle. The protein localises to the phagosome. Receptor which is involved in the phagocytosis of a variety of cells including apoptotic cells, severed and pruned axons, degenerating dendrites, salivary gland cells, germline cells and bacteria. Binds to the ligand prtp which relocates from the endoplasmic reticulum to the cell surface during apoptosis. Ligand-binding may promote tyrosine phosphorylation mediated by Src42a, interaction with shark and subsequent activation of phagocytosis. Also binds to the membrane phospholipid phosphatidylserine which is exposed on the surface of apoptotic cells. Required for the phagocytosis of apoptotic cells by macrophages. Also required for the phagocytosis of apoptotic neurons by glial cells in the embryonic nervous system. Acts downstream of NimC4/simu in the glial phagocytosis of apoptotic neurons. Plays a role in the glial engulfment of larval axons as part of programmed axon pruning during metamorphosis. Also mediates glial cell clearance of severed axons following axonal injury. Required for the engulfment of degenerating dendrites by epidermal cells. Required in the ovary for the engulfment and subsequent processing of dying germline cells by follicular epithelial cells through activation of the JNK/bsk pathway. Plays a role in neuromuscular junction development by mediating the clearance of presynaptic debris and immature boutons which are shed by growing synapses. Required for larval salivary gland cell death which occurs following a rise in steroid levels after puparium formation. Also involved in bacterial phagocytosis. Required for hemocyte phagocytosis of the Gram-positive bacterium S.aureus. Lipoteichoic acid, synthesized by the S.aureus lipoteichoic acid synthase ltaS, acts as a ligand for drpr in this process. Together with Src42a and shark, promotes the migration of macrophages to sites of wounding as part of a signaling cascade where Scr42a detects production of hydrogen peroxide at wound sites which triggers phosphorylation of drpr and subsequent recruitment and activation of shark. Also required for macrophage priming which occurs following phagocytosis of apoptotic cells and ensures that macrophages develop a form of molecular memory that allows them to later mount an inflammatory response to tissue damage and bacterial infection. Is also an essential factor in the regulation of muscle development and myogenesis, and as a consequence is required for normal locomotion. Likely to control the balance between skeletal muscle satellite cells proliferation and differentiation through regulation of the notch signaling pathway. In terms of biological role, promotes engulfment of axonal debris by glial cells following axonal injury. Its function is as follows. Potently inhibits glial cell engulfment of axonal debris produced following axonal injury. The polypeptide is Protein draper (Drosophila melanogaster (Fruit fly)).